Reading from the N-terminus, the 2499-residue chain is Probable polyketide synthase 23 (2499 aa).

A Ketosynthase family 3 (KS3) domain is found at 11 to 430 (DNQVAIVGLG…GSNACVLLSE (420 aa)). Residues Cys-177, His-316, and His-354 each act as for beta-ketoacyl synthase activity in the active site. The acyl/malonyl transferases stretch occupies residues 623-656 (GITPSIIVGHSLGEVASAFCSGMIDLETACFVIY). Ser-633 functions as the For acyl/malonyl transferase activity in the catalytic mechanism. The N-terminal hotdog fold stretch occupies residues 924-1044 (INQLGNKNEL…SRILMKSLDV (121 aa)). The 286-residue stretch at 924 to 1209 (INQLGNKNEL…IASTLSTNID (286 aa)) folds into the PKS/mFAS DH domain. The active-site Proton acceptor; for dehydratase activity is His-956. The tract at residues 1059–1209 (NWSTLKREQL…IASTLSTNID (151 aa)) is C-terminal hotdog fold. The Proton donor; for dehydratase activity role is filled by Asp-1121. One can recognise a Carrier domain in the interval 2414 to 2491 (EKEFSIRQDI…QIINIVTTKV (78 aa)). Position 2451 is an O-(pantetheine 4'-phosphoryl)serine (Ser-2451).

Pantetheine 4'-phosphate is required as a cofactor.

Probable polyketide synthase. This is Probable polyketide synthase 23 (pks23) from Dictyostelium discoideum (Social amoeba).